The sequence spans 194 residues: Chitin synthase 2 (194 aa).

It belongs to the chitin synthase family. Class III subfamily.

The protein resides in the cell membrane. The enzyme catalyses [(1-&gt;4)-N-acetyl-beta-D-glucosaminyl](n) + UDP-N-acetyl-alpha-D-glucosamine = [(1-&gt;4)-N-acetyl-beta-D-glucosaminyl](n+1) + UDP + H(+). Polymerizes chitin, a structural polymer of the cell wall and septum, by transferring the sugar moiety of UDP-GlcNAc to the non-reducing end of the growing chitin polymer. This Ajellomyces capsulatus (Darling's disease fungus) protein is Chitin synthase 2 (CHS2).